Consider the following 122-residue polypeptide: Large ribosomal subunit protein uL14 (122 aa).

This sequence belongs to the universal ribosomal protein uL14 family. Part of the 50S ribosomal subunit. Forms a cluster with proteins L3 and L19. In the 70S ribosome, L14 and L19 interact and together make contacts with the 16S rRNA in bridges B5 and B8.

Its function is as follows. Binds to 23S rRNA. Forms part of two intersubunit bridges in the 70S ribosome. The polypeptide is Large ribosomal subunit protein uL14 (Nitrosospira multiformis (strain ATCC 25196 / NCIMB 11849 / C 71)).